Consider the following 251-residue polypeptide: tRNA-cytidine(32) 2-sulfurtransferase 2 (251 aa).

Residues 33–38 (SGGKDS) carry the PP-loop motif motif. Cys108, Cys111, and Cys199 together coordinate [4Fe-4S] cluster.

Belongs to the TtcA family. As to quaternary structure, homodimer. Mg(2+) is required as a cofactor. It depends on [4Fe-4S] cluster as a cofactor.

Its subcellular location is the cytoplasm. The enzyme catalyses cytidine(32) in tRNA + S-sulfanyl-L-cysteinyl-[cysteine desulfurase] + AH2 + ATP = 2-thiocytidine(32) in tRNA + L-cysteinyl-[cysteine desulfurase] + A + AMP + diphosphate + H(+). It participates in tRNA modification. Its function is as follows. Catalyzes the ATP-dependent 2-thiolation of cytidine in position 32 of tRNA, to form 2-thiocytidine (s(2)C32). The sulfur atoms are provided by the cysteine/cysteine desulfurase (IscS) system. The protein is tRNA-cytidine(32) 2-sulfurtransferase 2 of Francisella tularensis subsp. tularensis (strain WY96-3418).